Consider the following 456-residue polypeptide: Histidine--tRNA ligase (456 aa).

The protein belongs to the class-II aminoacyl-tRNA synthetase family. Homodimer.

Its subcellular location is the cytoplasm. It carries out the reaction tRNA(His) + L-histidine + ATP = L-histidyl-tRNA(His) + AMP + diphosphate + H(+). This Christiangramia forsetii (strain DSM 17595 / CGMCC 1.15422 / KT0803) (Gramella forsetii) protein is Histidine--tRNA ligase.